Consider the following 523-residue polypeptide: GMP synthase [glutamine-hydrolyzing] (523 aa).

The region spanning 8 to 205 (KILILDFGSQ…VVNICGCETK (198 aa)) is the Glutamine amidotransferase type-1 domain. Catalysis depends on C85, which acts as the Nucleophile. Catalysis depends on residues H179 and E181. The GMPS ATP-PPase domain maps to 206-398 (WTAENIIEDA…LGLPAEMINR (193 aa)). ATP is bound at residue 233-239 (SGGVDSS).

Homodimer.

It catalyses the reaction XMP + L-glutamine + ATP + H2O = GMP + L-glutamate + AMP + diphosphate + 2 H(+). It functions in the pathway purine metabolism; GMP biosynthesis; GMP from XMP (L-Gln route): step 1/1. Its function is as follows. Catalyzes the synthesis of GMP from XMP. This chain is GMP synthase [glutamine-hydrolyzing] (guaA), found in Haemophilus influenzae (strain ATCC 51907 / DSM 11121 / KW20 / Rd).